The following is an 85-amino-acid chain: UPF0386 protein Meso_1721 (85 aa).

This sequence belongs to the UPF0386 family.

The polypeptide is UPF0386 protein Meso_1721 (Chelativorans sp. (strain BNC1)).